A 222-amino-acid polypeptide reads, in one-letter code: Large ribosomal subunit protein uL1 (222 aa).

This sequence belongs to the universal ribosomal protein uL1 family. In terms of assembly, part of the 50S ribosomal subunit.

Binds directly to 23S rRNA. Probably involved in E site tRNA release. In terms of biological role, protein L1 is also a translational repressor protein, it controls the translation of its operon by binding to its mRNA. The chain is Large ribosomal subunit protein uL1 from Pyrobaculum neutrophilum (strain DSM 2338 / JCM 9278 / NBRC 100436 / V24Sta) (Thermoproteus neutrophilus).